The sequence spans 1477 residues: Putative insulin-like peptide receptor (1477 aa).

The signal sequence occupies residues 1–24 (MMRNVQSFYFLFLLIVLNFHVVLS). The Extracellular segment spans residues 25 to 980 (AVCIGQRATT…LSVTKNNNQL (956 aa)). N55, N255, N300, N325, N457, N491, N549, N644, N732, N791, N874, N895, and N957 each carry an N-linked (GlcNAc...) asparagine glycan. Fibronectin type-III domains lie at 652-750 (EPLG…IKAD) and 780-869 (NKSP…IVQA). The Fibronectin type-III 3 domain occupies 880–971 (LDSKMVRVQV…EEIHFKVAEL (92 aa)). Residues 981 to 1001 (IIGIISAVSAVIVALLVFILL) form a helical membrane-spanning segment. Over 1002–1477 (YMFLHRKLEK…EIFYGKPIPV (476 aa)) the chain is Cytoplasmic. One can recognise a Protein kinase domain in the interval 1044-1315 (IELIRELGQG…LENEVDDDFV (272 aa)). Residues 1050–1058 (LGQGSFGMV) and K1077 contribute to the ATP site. D1175 functions as the Proton acceptor in the catalytic mechanism. Position 1201 is a phosphotyrosine; by autocatalysis (Y1201). Disordered stretches follow at residues 1350-1376 (YTKG…KSKE) and 1391-1421 (KYDA…SNAC). Polar residues predominate over residues 1356-1368 (NMQNMLSRSQNRK). Positions 1403–1412 (KKKKRPRSKR) are enriched in basic residues.

The protein belongs to the protein kinase superfamily. Tyr protein kinase family. Insulin receptor subfamily. Mn(2+) is required as a cofactor. As to expression, expressed in dividing epithelial cells.

The protein localises to the membrane. It catalyses the reaction L-tyrosyl-[protein] + ATP = O-phospho-L-tyrosyl-[protein] + ADP + H(+). This receptor probably binds an insulin related protein and has a tyrosine-protein kinase activity. This chain is Putative insulin-like peptide receptor (HTK7), found in Hydra vulgaris (Hydra).